The following is a 101-amino-acid chain: Small ribosomal subunit protein uS14 (101 aa).

Belongs to the universal ribosomal protein uS14 family. In terms of assembly, part of the 30S ribosomal subunit. Contacts proteins S3 and S10.

Functionally, binds 16S rRNA, required for the assembly of 30S particles and may also be responsible for determining the conformation of the 16S rRNA at the A site. The sequence is that of Small ribosomal subunit protein uS14 from Shewanella putrefaciens (strain CN-32 / ATCC BAA-453).